A 249-amino-acid chain; its full sequence is 5'-nucleotidase SurE (249 aa).

Residues D9, D10, S40, and N92 each coordinate a divalent metal cation.

The protein belongs to the SurE nucleotidase family. A divalent metal cation is required as a cofactor.

Its subcellular location is the cytoplasm. It carries out the reaction a ribonucleoside 5'-phosphate + H2O = a ribonucleoside + phosphate. Nucleotidase that shows phosphatase activity on nucleoside 5'-monophosphates. The polypeptide is 5'-nucleotidase SurE (Shewanella putrefaciens (strain CN-32 / ATCC BAA-453)).